A 343-amino-acid polypeptide reads, in one-letter code: tRNA N6-adenosine threonylcarbamoyltransferase (343 aa).

Residues His-111 and His-115 each coordinate Fe cation. Substrate contacts are provided by residues 134–138 (LVSGG), Asp-167, Gly-180, and Asn-276. Residue Asp-304 coordinates Fe cation.

This sequence belongs to the KAE1 / TsaD family. The cofactor is Fe(2+).

The protein resides in the cytoplasm. It carries out the reaction L-threonylcarbamoyladenylate + adenosine(37) in tRNA = N(6)-L-threonylcarbamoyladenosine(37) in tRNA + AMP + H(+). Functionally, required for the formation of a threonylcarbamoyl group on adenosine at position 37 (t(6)A37) in tRNAs that read codons beginning with adenine. Is involved in the transfer of the threonylcarbamoyl moiety of threonylcarbamoyl-AMP (TC-AMP) to the N6 group of A37, together with TsaE and TsaB. TsaD likely plays a direct catalytic role in this reaction. The chain is tRNA N6-adenosine threonylcarbamoyltransferase from Chromohalobacter salexigens (strain ATCC BAA-138 / DSM 3043 / CIP 106854 / NCIMB 13768 / 1H11).